Reading from the N-terminus, the 312-residue chain is Oxidoreductase NAD-binding domain-containing protein 1 (312 aa).

The signal sequence occupies residues 1 to 17 (MACAAVMIPGLLRCSVG). The 137-residue stretch at 50 to 186 (HMERTASVLR…GGVGINPLLS (137 aa)) folds into the FAD-binding FR-type domain. 178–183 (GVGINP) contributes to the NAD(+) binding site.

In Homo sapiens (Human), this protein is Oxidoreductase NAD-binding domain-containing protein 1 (OXNAD1).